The sequence spans 284 residues: NAD kinase (284 aa).

Catalysis depends on aspartate 70, which acts as the Proton acceptor. NAD(+) contacts are provided by residues 70 to 71, 139 to 140, lysine 167, aspartate 169, leucine 177, 180 to 185, and glutamine 236; these read DG, NE, and TAYNLS.

It belongs to the NAD kinase family. The cofactor is a divalent metal cation.

It localises to the cytoplasm. It catalyses the reaction NAD(+) + ATP = ADP + NADP(+) + H(+). Functionally, involved in the regulation of the intracellular balance of NAD and NADP, and is a key enzyme in the biosynthesis of NADP. Catalyzes specifically the phosphorylation on 2'-hydroxyl of the adenosine moiety of NAD to yield NADP. This Helicobacter pylori (strain ATCC 700392 / 26695) (Campylobacter pylori) protein is NAD kinase.